The following is a 1229-amino-acid chain: Putative cell division cycle ATPase (1229 aa).

Residues G252–V267 are compositionally biased toward low complexity. A disordered region spans residues G252–E315. Residues P268 to N281 are compositionally biased toward basic and acidic residues. Low complexity predominate over residues N282–N314. ATP is bound at residue G568 to T575. Disordered regions lie at residues T814–D837 and F860–R892. 2 stretches are compositionally biased toward basic and acidic residues: residues D819 to D837 and N882 to R892. G975–T982 provides a ligand contact to ATP.

It belongs to the AAA ATPase family.

In Plasmodium falciparum (isolate 3D7), this protein is Putative cell division cycle ATPase.